An 865-amino-acid polypeptide reads, in one-letter code: cGMP-specific 3',5'-cyclic phosphodiesterase (865 aa).

Ser-92 is modified (phosphoserine). GAF domains follow at residues 154–304 (DVTA…GIVL) and 336–493 (SLEV…GLGI). Residues 526-850 (ETRELQALSA…QKWQALAEQQ (325 aa)) form the PDEase domain. His-603 acts as the Proton donor in catalysis. Zn(2+) is bound by residues His-607, His-643, Asp-644, and Asp-754. Asp-644 provides a ligand contact to Mg(2+). A 3',5'-cyclic GMP-binding site is contributed by Gln-807.

Belongs to the cyclic nucleotide phosphodiesterase family. Zn(2+) is required as a cofactor. Mg(2+) serves as cofactor. In terms of processing, phosphorylation is regulated by binding of cGMP to the two allosteric sites. Phosphorylation by PRKG1 leads to its activation.

The catalysed reaction is 3',5'-cyclic GMP + H2O = GMP + H(+). It participates in purine metabolism; 3',5'-cyclic GMP degradation; GMP from 3',5'-cyclic GMP: step 1/1. Plays a role in signal transduction by regulating the intracellular concentration of cyclic nucleotides. This phosphodiesterase catalyzes the specific hydrolysis of cGMP to 5'-GMP. Specifically regulates nitric-oxide-generated cGMP. The sequence is that of cGMP-specific 3',5'-cyclic phosphodiesterase (Pde5a) from Mus musculus (Mouse).